Here is a 145-residue protein sequence, read N- to C-terminus: uncharacterized protein (145 aa).

A helical membrane pass occupies residues 1–21 (MWFLVKATFWFSLVLVLLPFL). The tract at residues 109-145 (TPAESVPSAEATEKAEPAFKRMPVPEHRLDPGPASGK) is disordered. A compositionally biased stretch (basic and acidic residues) spans 119-138 (ATEKAEPAFKRMPVPEHRLD).

The protein resides in the membrane. This is an uncharacterized protein from Rhizobium meliloti (strain 1021) (Ensifer meliloti).